The sequence spans 528 residues: Endoglucanase 24 (528 aa).

The signal sequence occupies residues 1–24; that stretch reads MGSKTKGCCGWLIVALVASLVATA. The active-site Nucleophile is D109. N-linked (GlcNAc...) asparagine glycosylation is present at N259. Residue H446 is part of the active site. N487 carries N-linked (GlcNAc...) asparagine glycosylation. Residues D492 and E501 contribute to the active site.

This sequence belongs to the glycosyl hydrolase 9 (cellulase E) family.

It localises to the secreted. It catalyses the reaction Endohydrolysis of (1-&gt;4)-beta-D-glucosidic linkages in cellulose, lichenin and cereal beta-D-glucans.. This chain is Endoglucanase 24, found in Oryza sativa subsp. japonica (Rice).